We begin with the raw amino-acid sequence, 997 residues long: FHIP family protein CPIJ015043 (997 aa).

2 disordered regions span residues 558-579 (DHRS…QQLQ) and 759-922 (NVVL…GGAA). The span at 569-579 (QQHLHQQQQLQ) shows a compositional bias: low complexity. Over residues 763–780 (GGSGPGGPRLSNGGGGTG) the composition is skewed to gly residues. 2 stretches are compositionally biased toward low complexity: residues 781–792 (SSITSSLSQTTP) and 830–889 (GSNS…MVGS). The segment covering 911–922 (IGSGTVGGGGAA) has biased composition (gly residues).

Belongs to the FHIP family.

The polypeptide is FHIP family protein CPIJ015043 (Culex quinquefasciatus (Southern house mosquito)).